The sequence spans 114 residues: Iron-sulfur cluster insertion protein ErpA (114 aa).

Positions 42, 106, and 108 each coordinate iron-sulfur cluster.

This sequence belongs to the HesB/IscA family. As to quaternary structure, homodimer. The cofactor is iron-sulfur cluster.

Functionally, required for insertion of 4Fe-4S clusters for at least IspG. The sequence is that of Iron-sulfur cluster insertion protein ErpA from Shigella boydii serotype 18 (strain CDC 3083-94 / BS512).